We begin with the raw amino-acid sequence, 350 residues long: Protein RecA (350 aa).

An ATP-binding site is contributed by G67–T74.

It belongs to the RecA family.

The protein resides in the cytoplasm. Its function is as follows. Can catalyze the hydrolysis of ATP in the presence of single-stranded DNA, the ATP-dependent uptake of single-stranded DNA by duplex DNA, and the ATP-dependent hybridization of homologous single-stranded DNAs. It interacts with LexA causing its activation and leading to its autocatalytic cleavage. The polypeptide is Protein RecA (Chlamydia felis (strain Fe/C-56) (Chlamydophila felis)).